We begin with the raw amino-acid sequence, 265 residues long: 3-methyl-2-oxobutanoate hydroxymethyltransferase (265 aa).

Residues Asp-45 and Asp-84 each contribute to the Mg(2+) site. 3-methyl-2-oxobutanoate is bound by residues 45–46 (DS), Asp-84, and Lys-112. Residue Glu-114 participates in Mg(2+) binding. Glu-182 functions as the Proton acceptor in the catalytic mechanism.

Belongs to the PanB family. Homodecamer; pentamer of dimers. Mg(2+) serves as cofactor.

It localises to the cytoplasm. It carries out the reaction 3-methyl-2-oxobutanoate + (6R)-5,10-methylene-5,6,7,8-tetrahydrofolate + H2O = 2-dehydropantoate + (6S)-5,6,7,8-tetrahydrofolate. The protein operates within cofactor biosynthesis; (R)-pantothenate biosynthesis; (R)-pantoate from 3-methyl-2-oxobutanoate: step 1/2. Functionally, catalyzes the reversible reaction in which hydroxymethyl group from 5,10-methylenetetrahydrofolate is transferred onto alpha-ketoisovalerate to form ketopantoate. The sequence is that of 3-methyl-2-oxobutanoate hydroxymethyltransferase from Baumannia cicadellinicola subsp. Homalodisca coagulata.